The chain runs to 359 residues: Molybdenum import ATP-binding protein ModC (359 aa).

Positions 1-229 (MLELNFSQQL…SALRPWLQRE (229 aa)) constitute an ABC transporter domain. Residue 31-38 (GLSGAGKT) participates in ATP binding. A Mop domain is found at 289–354 (SSSIRNILPV…IKSVSFNRQN (66 aa)).

The protein belongs to the ABC transporter superfamily. Molybdate importer (TC 3.A.1.8) family. In terms of assembly, the complex is composed of two ATP-binding proteins (ModC), two transmembrane proteins (ModB) and a solute-binding protein (ModA).

Its subcellular location is the cell inner membrane. It carries out the reaction molybdate(out) + ATP + H2O = molybdate(in) + ADP + phosphate + H(+). Its function is as follows. Part of the ABC transporter complex ModABC involved in molybdenum import. Responsible for energy coupling to the transport system. In Yersinia pestis bv. Antiqua (strain Antiqua), this protein is Molybdenum import ATP-binding protein ModC.